Consider the following 208-residue polypeptide: MKTLKPALLVSIVLLVVCGLVYPLVLTGVSQVAFKDKANGSMIEVNGVKVGSELIGQSFTDARFFKGRVSSVNYNTYTKEDLVPDKDGNTSYGGVSSGSFNYGATNPELHDRVQKDIEKFLKDNPTVKREDIPTDLLTASGSGLDPNISPASAKIQIPAIAKASGISESKLQKIVDDNTSKKLFGVLGEDRVNVLKVNVEVAKILGLI.

A helical transmembrane segment spans residues 6–26 (PALLVSIVLLVVCGLVYPLVL).

Belongs to the KdpC family. In terms of assembly, the system is composed of three essential subunits: KdpA, KdpB and KdpC.

It localises to the cell membrane. Functionally, part of the high-affinity ATP-driven potassium transport (or Kdp) system, which catalyzes the hydrolysis of ATP coupled with the electrogenic transport of potassium into the cytoplasm. This subunit acts as a catalytic chaperone that increases the ATP-binding affinity of the ATP-hydrolyzing subunit KdpB by the formation of a transient KdpB/KdpC/ATP ternary complex. The sequence is that of Potassium-transporting ATPase KdpC subunit from Clostridioides difficile (strain 630) (Peptoclostridium difficile).